Reading from the N-terminus, the 326-residue chain is Glyoxylate/hydroxypyruvate reductase B (326 aa).

Catalysis depends on residues Arg237 and Glu266. His285 serves as the catalytic Proton donor.

It belongs to the D-isomer specific 2-hydroxyacid dehydrogenase family. GhrB subfamily. In terms of assembly, homodimer.

It is found in the cytoplasm. The catalysed reaction is glycolate + NADP(+) = glyoxylate + NADPH + H(+). It carries out the reaction (R)-glycerate + NAD(+) = 3-hydroxypyruvate + NADH + H(+). The enzyme catalyses (R)-glycerate + NADP(+) = 3-hydroxypyruvate + NADPH + H(+). Its function is as follows. Catalyzes the NADPH-dependent reduction of glyoxylate and hydroxypyruvate into glycolate and glycerate, respectively. This is Glyoxylate/hydroxypyruvate reductase B from Yersinia pestis bv. Antiqua (strain Nepal516).